Reading from the N-terminus, the 699-residue chain is eEF1A lysine and N-terminal methyltransferase (699 aa).

Residue Met-1 is modified to N-acetylmethionine. The residue at position 267 (Ser-267) is a Phosphoserine. The interval Val-433–Ala-460 is disordered. A compositionally biased stretch (basic residues) spans Arg-436–Arg-449.

This sequence belongs to the methyltransferase superfamily. Forms a tripartite complex containing GAB1, METTL13 and SPRY2. Within the complex interacts with GAB1 and SPRY2.

The protein resides in the cytoplasm. It is found in the nucleus. The protein localises to the mitochondrion. It catalyses the reaction L-lysyl-[protein] + S-adenosyl-L-methionine = N(6)-methyl-L-lysyl-[protein] + S-adenosyl-L-homocysteine + H(+). The enzyme catalyses N(6)-methyl-L-lysyl-[protein] + S-adenosyl-L-methionine = N(6),N(6)-dimethyl-L-lysyl-[protein] + S-adenosyl-L-homocysteine + H(+). It carries out the reaction N-terminal glycyl-L-lysyl-L-glutamyl-[protein] + 3 S-adenosyl-L-methionine = N-terminal N,N,N-trimethyl-glycyl-L-lysyl-L-glutamyl-[protein] + 3 S-adenosyl-L-homocysteine + 3 H(+). In terms of biological role, dual methyltransferase that catalyzes methylation of elongation factor 1-alpha (EEF1A1 and EEF1A2) at two different positions, and is therefore involved in the regulation of mRNA translation. Via its C-terminus, methylates EEF1A1 and EEF1A2 at the N-terminal residue 'Gly-2'. Via its N-terminus dimethylates EEF1A1 and EEF1A2 at residue 'Lys-55'. Has no activity towards core histones H2A, H2B, H3 and H4. This is eEF1A lysine and N-terminal methyltransferase (METTL13) from Bos taurus (Bovine).